The sequence spans 314 residues: Homoserine kinase (314 aa).

Residue 97–107 participates in ATP binding; sequence PPARGMGSSAT.

This sequence belongs to the GHMP kinase family. Homoserine kinase subfamily.

The protein resides in the cytoplasm. It carries out the reaction L-homoserine + ATP = O-phospho-L-homoserine + ADP + H(+). The protein operates within amino-acid biosynthesis; L-threonine biosynthesis; L-threonine from L-aspartate: step 4/5. In terms of biological role, catalyzes the ATP-dependent phosphorylation of L-homoserine to L-homoserine phosphate. The sequence is that of Homoserine kinase from Synechococcus sp. (strain RCC307).